A 101-amino-acid chain; its full sequence is Small ribosomal subunit protein uS14A (101 aa).

The segment at I31–L74 is disordered. The segment covering R61–P70 has biased composition (basic and acidic residues).

Belongs to the universal ribosomal protein uS14 family. As to quaternary structure, part of the 30S ribosomal subunit. Contacts proteins S3 and S10.

Functionally, binds 16S rRNA, required for the assembly of 30S particles and may also be responsible for determining the conformation of the 16S rRNA at the A site. In Nocardia farcinica (strain IFM 10152), this protein is Small ribosomal subunit protein uS14A.